Consider the following 433-residue polypeptide: Xylose isomerase (433 aa).

Mg(2+)-binding residues include aspartate 305 and aspartate 307.

It belongs to the xylose isomerase family. As to quaternary structure, homotetramer. It depends on Mg(2+) as a cofactor.

It localises to the cytoplasm. The enzyme catalyses alpha-D-xylose = alpha-D-xylulofuranose. This Cereibacter sphaeroides (strain KD131 / KCTC 12085) (Rhodobacter sphaeroides) protein is Xylose isomerase.